A 321-amino-acid polypeptide reads, in one-letter code: Olfactory receptor 5K4 (321 aa).

Over 1–25 the chain is Extracellular; sequence MARENHSLAAEFILIGFTNYPELKT. Asn-5 carries N-linked (GlcNAc...) asparagine glycosylation. The helical transmembrane segment at 26-46 threads the bilayer; the sequence is LLFVVFSAIYLVTMVGNLGLV. Residues 47-54 lie on the Cytoplasmic side of the membrane; sequence ALIYVERR. A helical transmembrane segment spans residues 55–75; sequence LLTPMYIFLGNLALMDSCCSC. The Extracellular segment spans residues 76–97; sequence AVTPKMLENFFSEDRIISLYEC. The cysteines at positions 97 and 179 are disulfide-linked. A helical membrane pass occupies residues 98-118; that stretch reads MAQFYFLCLAETTDCFLLATM. Residues 119-139 lie on the Cytoplasmic side of the membrane; the sequence is AYDRYVAICHPLQYHTMMSKT. The chain crosses the membrane as a helical span at residues 140 to 160; sequence LCIRMTTGAFKAGNLHSMIHV. Topologically, residues 161–205 are extracellular; the sequence is GLLLRLTFCRSNKIHHFFCDILPLYRLSCTDPSINELMIYIFSIP. Residues 206-226 form a helical membrane-spanning segment; the sequence is IQIFTIATVLISYLCILLTVF. At 227–240 the chain is on the cytoplasmic side; sequence KMKSKEGRGKAFST. The helical transmembrane segment at 241–261 threads the bilayer; the sequence is CASHFLSVSIFYICLLMYIGP. The Extracellular portion of the chain corresponds to 262–268; the sequence is SEEGDKD. A helical transmembrane segment spans residues 269–289; the sequence is TPVAIFYAIVIPLLNPFIYSL. At 290-321 the chain is on the cytoplasmic side; sequence RNKEVINVLKKIMRNYNILKQTCSIANLFLIY.

The protein belongs to the G-protein coupled receptor 1 family.

It is found in the cell membrane. Odorant receptor. This Homo sapiens (Human) protein is Olfactory receptor 5K4 (OR5K4).